The sequence spans 456 residues: Trigger factor (456 aa).

One can recognise a PPIase FKBP-type domain in the interval 192-277; the sequence is GDTVVIDFVG…IHEVKTKEVP (86 aa).

It belongs to the FKBP-type PPIase family. Tig subfamily.

It localises to the cytoplasm. It carries out the reaction [protein]-peptidylproline (omega=180) = [protein]-peptidylproline (omega=0). Functionally, involved in protein export. Acts as a chaperone by maintaining the newly synthesized protein in an open conformation. Functions as a peptidyl-prolyl cis-trans isomerase. The sequence is that of Trigger factor from Streptococcus pyogenes serotype M2 (strain MGAS10270).